A 429-amino-acid chain; its full sequence is D-amino acid dehydrogenase 1 (429 aa).

An FAD-binding site is contributed by 3–17 (VLVLGSGVIGVTSAY).

Belongs to the DadA oxidoreductase family. Requires FAD as cofactor.

The enzyme catalyses a D-alpha-amino acid + A + H2O = a 2-oxocarboxylate + AH2 + NH4(+). Oxidative deamination of D-amino acids. The protein is D-amino acid dehydrogenase 1 (dadA1) of Ralstonia nicotianae (strain ATCC BAA-1114 / GMI1000) (Ralstonia solanacearum).